Consider the following 85-residue polypeptide: Selenoprotein W (85 aa).

Positions 10–13 (CGAU) form a cross-link, cysteinyl-selenocysteine (Cys-Sec); redox-active. Position 13 (Sec13) is a non-standard amino acid, selenocysteine.

Belongs to the SelWTH family. Selenoprotein W subfamily. As to expression, expressed ubiquitously with predominant expression in the pituitary, spinal cord, sciatic nerve, cerebral cortex, cerebral nuclei, thalamus, cerebellum, muscle, cartilage, trachea, gizzard and artery. Weakly expressed in pancreas, testis, ovary, kidney and veins.

It localises to the cytoplasm. Functionally, plays a role as a glutathione (GSH)-dependent antioxidant. May be involved in a redox-related process. May play a role in the myopathies of selenium deficiency. The polypeptide is Selenoprotein W (Gallus gallus (Chicken)).